Reading from the N-terminus, the 1025-residue chain is MEPRQKKARFFDSEEDFGPDTKSLIRPGSSHKPGKPASNSLARPTPAPSTFRSDLEAFLGPLSDQRFGLLLAKSKGNVEQAVNIHFDLPEEVQQATSEETAEEAEVSQTTTSGFETTQKPSQNTQVPSRVHTRGGCSTSRFIGSLVVTAWASKSSKGKVKYQDRLVVERQSHDHSKSIRKNPTDNSHVHIRTVSGELLGRISGEHDYSIASLIDSRVCDFEASCVYADHNLSLGSNFVVELKCYLTEEAFQDVAMPLLDSKTAKKREYVFDNSRESHVEKMLRNRQIAIVDLFGKLNLIKENEANADMVKDMLRAKSQPPSSQPPSQNSEDESEPIPTDELDALYKRIEKEDVEQPETEVEGFPLELRRYQKQGLTWMISRETEVSEYFDNDDSGPINPLWTKVDFPGSDEKFYVNFSSGALTLKFPKQERSFSGGILADEMGLGKTISTLAMVYRDRHVGCTLVVAPMSLLWQWEQECERVGLSTYVYHEKGADIDLDELFKTYSPNILITSYHTLVSHYGQIKALGGGLDRNVISETSSHERPKIFTKHFHRIVLDEAHVIKNRNTVSAKACCLLRATNKWALTGTPIHNRLEDLFSILKFLGAAPWNDFIYWRNFITLPFQEGKIVSALMTVQCILEPIVLRRTKNMKQADGSPLVVLPKKTINIEKVALTDQERVIYSYVLARAQTSLQKSEASEAVGRNYLNILTQILRLRQSCCDPALILRPEAEVPTDEQLQIEENESQLKSMIQQYNDDTQTSACEYSSEIIAQLQDQSAPPECPICAEDVTKLAISKCLHMGCVDCLADNVRFQESKKQTPVCCICRQPAALKDIFEVERTGEDCKDIRLKKLSDRPRSSKLVALVSKLKQLPKDAKSVVFSQFTSYLDIIQTELRREKIQAFRFDGTLSRQQRTDVLKAFGLSKGSVLLISLKTGGVGLNLVTANHAFIMDPWWTFAQEAQAIDRIHRMGQTKDVHVTRFIVENSVEEKMLKIQQQKMVLAGTLGMSEQEQKAQRIENIKTLLGE.

Over residues 1–12 the composition is skewed to basic and acidic residues; sequence MEPRQKKARFFD. Disordered stretches follow at residues 1-49, 93-133, and 314-336; these read MEPR…PAPS, QQAT…VHTR, and RAKS…SEPI. 2 stretches are compositionally biased toward polar residues: residues 37–49 and 113–127; these read ASNS…PAPS and GFET…TQVP. The segment covering 317-328 has biased composition (low complexity); sequence SQPPSSQPPSQN. A Helicase ATP-binding domain is found at 427 to 607; it reads PKQERSFSGG…FSILKFLGAA (181 aa). 440 to 447 is a binding site for ATP; it reads DEMGLGKT. The short motif at 558-561 is the DEAH box element; sequence DEAH. The RING-type zinc finger occupies 782–826; it reads CPICAEDVTKLAISKCLHMGCVDCLADNVRFQESKKQTPVCCICR. A Helicase C-terminal domain is found at 860 to 1012; that stretch reads KLVALVSKLK…TLGMSEQEQK (153 aa).

It belongs to the SNF2/RAD54 helicase family.

Its subcellular location is the cytoplasm. It localises to the nucleus. Functionally, probable helicase, member of the UBC2/RAD6 epistasis group. Functions with DNA repair protein RAD18 in error-free postreplication DNA repair. Involved in the maintenance of wild-type rates of instability of simple repetitive sequences such as poly(GT) repeats. Seems to be involved in maintaining a balance which acts in favor of error-prone non-homologous joining during DNA double-strand breaks repairs. This chain is DNA repair protein RAD5 (RAD5), found in Yarrowia lipolytica (strain CLIB 122 / E 150) (Yeast).